The sequence spans 258 residues: Imidazole glycerol phosphate synthase subunit HisF (258 aa).

Catalysis depends on residues Asp11 and Asp130.

It belongs to the HisA/HisF family. As to quaternary structure, heterodimer of HisH and HisF.

The protein localises to the cytoplasm. The enzyme catalyses 5-[(5-phospho-1-deoxy-D-ribulos-1-ylimino)methylamino]-1-(5-phospho-beta-D-ribosyl)imidazole-4-carboxamide + L-glutamine = D-erythro-1-(imidazol-4-yl)glycerol 3-phosphate + 5-amino-1-(5-phospho-beta-D-ribosyl)imidazole-4-carboxamide + L-glutamate + H(+). The protein operates within amino-acid biosynthesis; L-histidine biosynthesis; L-histidine from 5-phospho-alpha-D-ribose 1-diphosphate: step 5/9. In terms of biological role, IGPS catalyzes the conversion of PRFAR and glutamine to IGP, AICAR and glutamate. The HisF subunit catalyzes the cyclization activity that produces IGP and AICAR from PRFAR using the ammonia provided by the HisH subunit. The polypeptide is Imidazole glycerol phosphate synthase subunit HisF (Haemophilus influenzae (strain PittEE)).